Reading from the N-terminus, the 405-residue chain is Cysteine desulfurase IscS (405 aa).

Pyridoxal 5'-phosphate is bound by residues 75-76, Asn156, Gln184, and 204-206; these read AT and SAH. Lys207 is subject to N6-(pyridoxal phosphate)lysine. Thr244 contacts pyridoxal 5'-phosphate. The Cysteine persulfide intermediate role is filled by Cys329. Residue Cys329 participates in [2Fe-2S] cluster binding.

It belongs to the class-V pyridoxal-phosphate-dependent aminotransferase family. NifS/IscS subfamily. As to quaternary structure, homodimer. Forms a heterotetramer with IscU, interacts with other sulfur acceptors. It depends on pyridoxal 5'-phosphate as a cofactor.

Its subcellular location is the cytoplasm. It carries out the reaction (sulfur carrier)-H + L-cysteine = (sulfur carrier)-SH + L-alanine. Its pathway is cofactor biosynthesis; iron-sulfur cluster biosynthesis. Functionally, master enzyme that delivers sulfur to a number of partners involved in Fe-S cluster assembly, tRNA modification or cofactor biosynthesis. Catalyzes the removal of elemental sulfur atoms from cysteine to produce alanine. Functions as a sulfur delivery protein for Fe-S cluster synthesis onto IscU, an Fe-S scaffold assembly protein, as well as other S acceptor proteins. In Acinetobacter baumannii (strain AB307-0294), this protein is Cysteine desulfurase IscS.